The chain runs to 155 residues: Ribosome maturation factor RimP (155 aa).

This sequence belongs to the RimP family.

The protein resides in the cytoplasm. Its function is as follows. Required for maturation of 30S ribosomal subunits. In Staphylococcus carnosus (strain TM300), this protein is Ribosome maturation factor RimP.